A 500-amino-acid chain; its full sequence is Cytochrome P450 2D20 (500 aa).

Cysteine 446 contacts heme.

Belongs to the cytochrome P450 family. It depends on heme as a cofactor.

It is found in the endoplasmic reticulum membrane. The protein resides in the microsome membrane. In Mesocricetus auratus (Golden hamster), this protein is Cytochrome P450 2D20 (CYP2D20).